Reading from the N-terminus, the 312-residue chain is Olfactory receptor 7D2 (312 aa).

Residues 1–25 are Extracellular-facing; the sequence is MEAGNQTGFLEFILLGLSEDPELQP. Asn-5 carries an N-linked (GlcNAc...) asparagine glycan. Residues 26–46 form a helical membrane-spanning segment; it reads FIFGLFLSMYLVTVLGNLLII. Residues 47–54 are Cytoplasmic-facing; that stretch reads LAISSDSH. The chain crosses the membrane as a helical span at residues 55–75; it reads LHTPMYFFLSNLSWVDICFST. Over 76–99 the chain is Extracellular; sequence CIVPKMLVNIQTENKAISYMDCLT. Cysteines 97 and 189 form a disulfide. The chain crosses the membrane as a helical span at residues 100–120; it reads QVYFSMFFPILDTLLLTVMAY. The Cytoplasmic portion of the chain corresponds to 121–139; the sequence is DRFVAVCHPLHYMIIMNPH. Residues 140 to 160 form a helical membrane-spanning segment; it reads LCGLLVFVTWLIGVMTSLLHI. At 161–197 the chain is on the extracellular side; the sequence is SLMMHLIFCKDFEIPHFFCELTYILQLACSDTFLNST. The chain crosses the membrane as a helical span at residues 198–217; sequence LIYFMTGVLGVFPLLGIIFS. Residues 218–237 lie on the Cytoplasmic side of the membrane; the sequence is YSRIASSIRKMSSSGGKQKA. Residues 238-258 form a helical membrane-spanning segment; the sequence is LSTCGSHLSVVSLFYGTGIGV. Topologically, residues 259–271 are extracellular; that stretch reads HFTSAVTHSSQKI. The chain crosses the membrane as a helical span at residues 272-292; sequence SVASVMYTVVTPMLNPFIYSL. Residues 293-312 are Cytoplasmic-facing; the sequence is RNKDVKGALGSLLSRAASCL.

Belongs to the G-protein coupled receptor 1 family.

Its subcellular location is the cell membrane. In terms of biological role, odorant receptor. The chain is Olfactory receptor 7D2 (OR7D2) from Homo sapiens (Human).